Here is a 345-residue protein sequence, read N- to C-terminus: Phosphoribosylformylglycinamidine cyclo-ligase (345 aa).

This sequence belongs to the AIR synthase family.

The protein resides in the cytoplasm. The enzyme catalyses 2-formamido-N(1)-(5-O-phospho-beta-D-ribosyl)acetamidine + ATP = 5-amino-1-(5-phospho-beta-D-ribosyl)imidazole + ADP + phosphate + H(+). It functions in the pathway purine metabolism; IMP biosynthesis via de novo pathway; 5-amino-1-(5-phospho-D-ribosyl)imidazole from N(2)-formyl-N(1)-(5-phospho-D-ribosyl)glycinamide: step 2/2. In Aeromonas salmonicida (strain A449), this protein is Phosphoribosylformylglycinamidine cyclo-ligase.